Consider the following 787-residue polypeptide: Phenylalanine--tRNA ligase beta subunit (787 aa).

Positions 39-149 constitute a tRNA-binding domain; that stretch reads APAFAGVVIA…EDAPVGTNIR (111 aa). Residues 400–475 form the B5 domain; the sequence is PEAKQVGLRL…RVYGYENIPD (76 aa). Residues aspartate 453, aspartate 459, glutamate 462, and glutamate 463 each contribute to the Mg(2+) site. Residues 694–786 form the FDX-ACB domain; that stretch reads SKFQPVRRDL…AATAAGARLR (93 aa).

It belongs to the phenylalanyl-tRNA synthetase beta subunit family. Type 1 subfamily. In terms of assembly, tetramer of two alpha and two beta subunits. Mg(2+) is required as a cofactor.

The protein resides in the cytoplasm. It catalyses the reaction tRNA(Phe) + L-phenylalanine + ATP = L-phenylalanyl-tRNA(Phe) + AMP + diphosphate + H(+). The chain is Phenylalanine--tRNA ligase beta subunit (pheT) from Neisseria meningitidis serogroup B (strain ATCC BAA-335 / MC58).